Reading from the N-terminus, the 236-residue chain is 2-C-methyl-D-erythritol 4-phosphate cytidylyltransferase (236 aa).

This sequence belongs to the IspD/TarI cytidylyltransferase family. IspD subfamily. In terms of assembly, homodimer.

It catalyses the reaction 2-C-methyl-D-erythritol 4-phosphate + CTP + H(+) = 4-CDP-2-C-methyl-D-erythritol + diphosphate. It functions in the pathway isoprenoid biosynthesis; isopentenyl diphosphate biosynthesis via DXP pathway; isopentenyl diphosphate from 1-deoxy-D-xylulose 5-phosphate: step 2/6. In terms of biological role, catalyzes the formation of 4-diphosphocytidyl-2-C-methyl-D-erythritol from CTP and 2-C-methyl-D-erythritol 4-phosphate (MEP). The sequence is that of 2-C-methyl-D-erythritol 4-phosphate cytidylyltransferase from Salmonella paratyphi C (strain RKS4594).